The chain runs to 331 residues: Putative type II secretion system C-type protein YghF (331 aa).

Residues 44–60 (MFWLMLLIISAKMAHSL) form a helical membrane-spanning segment.

This sequence belongs to the GSP C family.

The protein resides in the cell inner membrane. In terms of biological role, involved in a type II secretion system (T2SS, formerly general secretion pathway, GSP) for the export of folded proteins across the outer membrane. In Escherichia coli (strain K12), this protein is Putative type II secretion system C-type protein YghF.